Here is a 293-residue protein sequence, read N- to C-terminus: SAGA-associated factor 29 (293 aa).

Positions 3 to 88 form a coiled coil; that stretch reads LVSADSRIAE…KALDKIAEIK (86 aa). Positions 152 to 293 constitute an SGF29 C-terminal domain; sequence GDYVARPGDK…VVACKEPKKK (142 aa). 2 histone H3K4me3 N-terminus binding regions span residues 194–196 and 240–243; these read DID and QTTC. A histone H3K4me3 binding region spans residues 264-266; that stretch reads FED. Lysine 288 is subject to N6-acetyllysine.

The protein belongs to the SGF29 family. In terms of assembly, interacts with dimethylated and trimethylated 'Lys-4' of histone H3 (H3K4me2 and H3K4me3), with a preference for the trimethylated form (H3K4me3). Component of some SAGA-type complexes. Component of the ADA2A-containing complex (ATAC), composed of KAT14, KAT2A, TADA2L, TADA3L, ZZ3, MBIP, WDR5, YEATS2, CCDC101 and DR1. Interacts with (methylated) CGAS. Interacts with TADA3L, GCN5L2, SUPT3H and MYC.

The protein localises to the nucleus. Chromatin reader component of some histone acetyltransferase (HAT) SAGA-type complexes like the TFTC-HAT, ATAC or STAGA complexes. SGF29 specifically recognizes and binds methylated 'Lys-4' of histone H3 (H3K4me), with a preference for trimethylated form (H3K4me3). In the SAGA-type complexes, SGF29 is required to recruit complexes to H3K4me. Involved in the response to endoplasmic reticulum (ER) stress by recruiting the SAGA complex to H3K4me, thereby promoting histone H3 acetylation and cell survival. Also binds non-histone proteins that are methylated on Lys residues: specifically recognizes and binds CGAS monomethylated on 'Lys-506'. The protein is SAGA-associated factor 29 of Homo sapiens (Human).